The chain runs to 346 residues: MGVDIKELVEPVAKEVELGFFSKKVIAIDAYNSLYQFLATIRQKDGTPLLDAQGNVTSHLNGLFYRTINYIELGIKPVYVFDGRPPELKQKELERRYQIKVEAEKKYREAIERGDLEEARIYAQQTSRLTAAMVHDAKLLLRYMGVPYVEAPSEGEAQAAYMVKKGDAWASGSQDFDSLLFGSPRLVRNLAITGKRKLPRKDVYVEVKPEIVELEELLRVHGITHQQLVVIGILVGTDYAPEGARGIGVKKALKLVKELKDPEKIFRSVEWSSDVPPEKILELFLHPEVTDSYELTWKEPDKEKVIELLVERHQFSMERVTNALDRLEKAVKTHFKQQSLESWFGF.

Residues 1 to 100 form an N-domain region; that stretch reads MGVDIKELVE…KELERRYQIK (100 aa). Residues aspartate 29, aspartate 82, glutamate 154, glutamate 156, aspartate 175, aspartate 177, and aspartate 238 each contribute to the Mg(2+) site. The segment at 118–260 is I-domain; sequence EARIYAQQTS…KALKLVKELK (143 aa). An interaction with PCNA region spans residues 336–344; the sequence is KQQSLESWF.

This sequence belongs to the XPG/RAD2 endonuclease family. FEN1 subfamily. As to quaternary structure, interacts with PCNA. PCNA stimulates the nuclease activity without altering cleavage specificity. Mg(2+) is required as a cofactor.

Functionally, structure-specific nuclease with 5'-flap endonuclease and 5'-3' exonuclease activities involved in DNA replication and repair. During DNA replication, cleaves the 5'-overhanging flap structure that is generated by displacement synthesis when DNA polymerase encounters the 5'-end of a downstream Okazaki fragment. Binds the unpaired 3'-DNA end and kinks the DNA to facilitate 5' cleavage specificity. Cleaves one nucleotide into the double-stranded DNA from the junction in flap DNA, leaving a nick for ligation. Also involved in the base excision repair (BER) pathway. Acts as a genome stabilization factor that prevents flaps from equilibrating into structures that lead to duplications and deletions. Also possesses 5'-3' exonuclease activity on nicked or gapped double-stranded DNA. The sequence is that of Flap endonuclease 1 from Thermofilum pendens (strain DSM 2475 / Hrk 5).